The following is a 208-amino-acid chain: Rac-like GTP-binding protein ARAC8 (208 aa).

15-22 (GDGAVGKT) contacts GTP. Residues 37–45 (YIPTVFDNF) carry the Effector region motif. Residues 62–66 (DTAGQ) and 120–123 (TKMD) each bind GTP. 2 S-palmitoyl cysteine lipidation sites follow: Cys-199 and Cys-205.

The protein belongs to the small GTPase superfamily. Rho family. Interacts with ICR1. Binds to SPK1. Although this sequence has a C-terminal -CXXX, it is palmitoylated at Cys-205, rather than prenylated.

It localises to the membrane. Acts as a negative regulator of abscisic acid (ABA) responses. The polypeptide is Rac-like GTP-binding protein ARAC8 (ARAC8) (Arabidopsis thaliana (Mouse-ear cress)).